We begin with the raw amino-acid sequence, 326 residues long: Beta-ketoacyl-[acyl-carrier-protein] synthase III (326 aa).

Catalysis depends on residues C112 and H251. The segment at 252-256 is ACP-binding; sequence QANSR. The active site involves N281.

Belongs to the thiolase-like superfamily. FabH family. In terms of assembly, homodimer.

Its subcellular location is the cytoplasm. It catalyses the reaction malonyl-[ACP] + acetyl-CoA + H(+) = 3-oxobutanoyl-[ACP] + CO2 + CoA. Its pathway is lipid metabolism; fatty acid biosynthesis. In terms of biological role, catalyzes the condensation reaction of fatty acid synthesis by the addition to an acyl acceptor of two carbons from malonyl-ACP. Catalyzes the first condensation reaction which initiates fatty acid synthesis and may therefore play a role in governing the total rate of fatty acid production. Possesses both acetoacetyl-ACP synthase and acetyl transacylase activities. Its substrate specificity determines the biosynthesis of branched-chain and/or straight-chain of fatty acids. The sequence is that of Beta-ketoacyl-[acyl-carrier-protein] synthase III from Clostridium botulinum (strain 657 / Type Ba4).